A 63-amino-acid chain; its full sequence is Large ribosomal subunit protein uL30 (63 aa).

Belongs to the universal ribosomal protein uL30 family. In terms of assembly, part of the 50S ribosomal subunit.

The protein is Large ribosomal subunit protein uL30 of Stenotrophomonas maltophilia (strain K279a).